The sequence spans 522 residues: Endochitinase 11 (522 aa).

The signal sequence occupies residues 1 to 24 (MLFSMVMFTERWWVGSKDCPRVPA). Residues asparagine 148 and asparagine 275 are each glycosylated (N-linked (GlcNAc...) asparagine). The 288-residue stretch at 235 to 522 (KHVYAPYVDF…ALTCLRNSTA (288 aa)) folds into the GH18 domain. The active-site Proton donor is glutamate 346. N-linked (GlcNAc...) asparagine glycosylation is found at asparagine 455 and asparagine 519.

Belongs to the glycosyl hydrolase 18 family. Chitinase class V subfamily.

It localises to the secreted. It catalyses the reaction Random endo-hydrolysis of N-acetyl-beta-D-glucosaminide (1-&gt;4)-beta-linkages in chitin and chitodextrins.. Secreted chitinase involved in the degradation of chitin, a component of the cell walls of fungi and exoskeletal elements of some animals (including worms and arthropods). Participates in the infection process and directly acts in the penetration process of the host cuticle. This Metarhizium anisopliae (Entomophthora anisopliae) protein is Endochitinase 11 (chi11).